The following is an 84-amino-acid chain: Toxin Aah4 (84 aa).

The signal sequence occupies residues 1–19 (MNYLIMFSLALLLVIGVES). The LCN-type CS-alpha/beta domain occupies 21–82 (RDGYIVDSKN…PIKDPSDDCH (62 aa)). Cystine bridges form between C31–C81, C35–C53, C39–C63, and C43–C65. R84 is a propeptide (removed by a carboxypeptidase).

Belongs to the long (4 C-C) scorpion toxin superfamily. Sodium channel inhibitor family. Alpha subfamily. As to expression, expressed by the venom gland.

Its subcellular location is the secreted. Functionally, alpha toxins bind voltage-independently at site-3 of sodium channels (Nav) and inhibit the inactivation of the activated channels, thereby blocking neuronal transmission. This toxin seems to specifically act on Nav1.6/SCN8A sodium channel. In vitro, it inhibits the proliferation of the prostate cancer cell line DU145 (IC(50)=15 uM). It shows low effect on the adhesion of DU145 cells to fibronectin (at 15 uM) and is inactive on DU145 cells migration. This Androctonus australis (Sahara scorpion) protein is Toxin Aah4.